The following is a 163-amino-acid chain: Transcription antitermination protein NusB (163 aa).

This sequence belongs to the NusB family.

Its function is as follows. Involved in transcription antitermination. Required for transcription of ribosomal RNA (rRNA) genes. Binds specifically to the boxA antiterminator sequence of the ribosomal RNA (rrn) operons. This chain is Transcription antitermination protein NusB, found in Chlorobium luteolum (strain DSM 273 / BCRC 81028 / 2530) (Pelodictyon luteolum).